The sequence spans 1337 residues: Receptor-type tyrosine-protein phosphatase eta (1337 aa).

The first 35 residues, 1-35, serve as a signal peptide directing secretion; it reads MKPAAREARLPPRSPGLRWALPLLLLLLRLGQILC. At 36 to 975 the chain is on the extracellular side; sequence AGGTPSPIPD…LPQDPGVICG (940 aa). Polar residues-rich tracts occupy residues 67 to 82 and 89 to 119; these read SFHK…VETN and SSGA…STGP. A disordered region spans residues 67 to 124; the sequence is SFHKQNGTGTPQVETNTSEDGESSGANDSLRTPEQGSNGTDGASQKTPSSTGPSPVFD. N-linked (GlcNAc...) asparagine glycans are attached at residues N72, N82, N93, N104, N142, N172, N192, N231, N258, N278, N342, N351, N376, N391, N396, N413, N431, N501, N525, N536, N582, N603, N618, N628, N637, N666, N669, N761, N772, N784, N790, N824, N910, and N937. Fibronectin type-III domains lie at 121 to 209, 207 to 291, 271 to 364, 368 to 456, 457 to 541, 542 to 623, 625 to 720, 721 to 817, and 816 to 902; these read PVFD…EPIP, PIPV…EGGL, NPYL…EFRT, QVFD…PPVP, VSDF…TVPS, AVFD…TAQY, RPSN…TDPA, SMAS…TDPP, and PPPP…SEVL. Residues 278 to 327 are disordered; that stretch reads NKTKGDPLGTEGGLDASNTERSRAGSPTAPVHDESLVGPVDPSSGQQSRD. The chain crosses the membrane as a helical span at residues 976–996; it reads AVFGCIFGALVIVTVGGFIFW. Topologically, residues 997–1337 are cytoplasmic; sequence RKKRKDAKNN…TFGKTNGYIA (341 aa). S1009 carries the post-translational modification Phosphoserine. The Tyrosine-protein phosphatase domain maps to 1041–1298; sequence FAEEYEDLKL…VFLNQCVLDI (258 aa). Substrate contacts are provided by residues D1205, 1239–1245, and Q1283; that span reads CSAGVGR. Residue C1239 is the Phosphocysteine intermediate of the active site.

This sequence belongs to the protein-tyrosine phosphatase family. Receptor class 3 subfamily. In terms of assembly, monomer. Interacts with CTNNB1 (phosphorylated) and JUP (phosphorylated). Interacts with FLT3 (phosphorylated). Interacts with GAB1 and GRB2. N- and O-glycosylated. Post-translationally, N-glycosylated. In terms of tissue distribution, expressed in the promyelocytic cell line HL-60, the granulocyte-macrophage colony-stimulating factor-dependent leukemic cell line F-36P, and the IL3 and erythropoietin-dependent leukemic cell line F-36E. Expressed predominantly in epithelial cells and lymphocytes. Enhanced expression at high cell density. As to expression, expressed in the brain.

It is found in the cell membrane. Its subcellular location is the cell projection. The protein localises to the ruffle membrane. The protein resides in the cell junction. It localises to the secreted. It is found in the extracellular space. It catalyses the reaction O-phospho-L-tyrosyl-[protein] + H2O = L-tyrosyl-[protein] + phosphate. Functionally, tyrosine phosphatase which dephosphorylates or contributes to the dephosphorylation of CTNND1, FLT3, PDGFRB, MET, KDR, LYN, SRC, MAPK1, MAPK3, EGFR, TJP1, OCLN, PIK3R1 and PIK3R2. Plays a role in cell adhesion, migration, proliferation and differentiation. Has a role in megakaryocytes and platelet formation. Involved in vascular development. Regulator of macrophage adhesion and spreading. Positively affects cell-matrix adhesion. Positive regulator of platelet activation and thrombosis. Negative regulator of cell proliferation. Negative regulator of PDGF-stimulated cell migration; through dephosphorylation of PDGFR. Positive regulator of endothelial cell survival, as well as of VEGF-induced SRC and AKT activation; through KDR dephosphorylation. Negative regulator of EGFR signaling pathway; through EGFR dephosphorylation. Enhances the barrier function of epithelial junctions during reassembly. Negatively regulates T-cell receptor (TCR) signaling. Upon T-cell TCR activation, it is up-regulated and excluded from the immunological synapses, while upon T-cell-antigen presenting cells (APC) disengagement, it is no longer excluded and can dephosphorylate PLCG1 and LAT to down-regulate prolongation of signaling. Activates angiogenesis and cell migration. Downregulates the expression of the endothelial adhesion molecules ICAM1 and VCAM1. The sequence is that of Receptor-type tyrosine-protein phosphatase eta (PTPRJ) from Homo sapiens (Human).